A 366-amino-acid polypeptide reads, in one-letter code: Chorismate synthase (366 aa).

Residues arginine 48 and arginine 54 each contribute to the NADP(+) site. FMN is bound by residues 125–127 (RSS), 237–238 (NA), glycine 277, 292–296 (KPTSS), and arginine 318.

The protein belongs to the chorismate synthase family. As to quaternary structure, homotetramer. FMNH2 serves as cofactor.

It catalyses the reaction 5-O-(1-carboxyvinyl)-3-phosphoshikimate = chorismate + phosphate. It functions in the pathway metabolic intermediate biosynthesis; chorismate biosynthesis; chorismate from D-erythrose 4-phosphate and phosphoenolpyruvate: step 7/7. Functionally, catalyzes the anti-1,4-elimination of the C-3 phosphate and the C-6 proR hydrogen from 5-enolpyruvylshikimate-3-phosphate (EPSP) to yield chorismate, which is the branch point compound that serves as the starting substrate for the three terminal pathways of aromatic amino acid biosynthesis. This reaction introduces a second double bond into the aromatic ring system. This chain is Chorismate synthase, found in Acidovorax ebreus (strain TPSY) (Diaphorobacter sp. (strain TPSY)).